The following is a 206-amino-acid chain: Large ribosomal subunit protein uL3 (206 aa).

Positions 122-154 are disordered; sequence VVKRHGHAGGPGGHGSRFHRHPGSMGANSTPSR.

Belongs to the universal ribosomal protein uL3 family. Part of the 50S ribosomal subunit. Forms a cluster with proteins L14 and L19.

Its function is as follows. One of the primary rRNA binding proteins, it binds directly near the 3'-end of the 23S rRNA, where it nucleates assembly of the 50S subunit. In Leptospira borgpetersenii serovar Hardjo-bovis (strain JB197), this protein is Large ribosomal subunit protein uL3.